We begin with the raw amino-acid sequence, 65 residues long: MGFKLVLFIAVLTLVGSSNAEISAKMDSRDSPMIQERRCLPAGKTCVRGPMRVPCCGSCSQNKCT.

The signal sequence occupies residues M1–A20. The propeptide occupies E21–E36. Disulfide bonds link C39–C56, C46–C59, and C55–C64.

The protein belongs to the neurotoxin 36 family. 02 subfamily. Expressed by the venom gland.

It localises to the secreted. Its function is as follows. Possesses strong antiplasmodial activity against the intra-erythrocyte stage of P.falciparum in vitro. IC(50) for inhibiting P.falciparum growth is 1.15 uM. Specifically interacts with infected erythrocytes. Does not lyse erythrocytes, is not cytotoxic to nucleated mammalian cells, and does not inhibit neuromuscular function. Has neither antibacterial nor antifungal activity. The chain is U2-theraphotoxin-Pc1a from Psalmopoeus cambridgei (Trinidad chevron tarantula).